The sequence spans 584 residues: uncharacterized protein (584 aa).

Positions 353–375 (NSEGQTNAETSLNGKGTVGNQWA) are enriched in polar residues. Disordered regions lie at residues 353–379 (NSEG…SPPE), 400–426 (LESK…VSSH), and 463–565 (SVDS…CNSG). Polar residues predominate over residues 502–511 (KANSPASSRL). Over residues 516 to 535 (DSSHLSKHVNFDKNPDHSEA) the composition is skewed to basic and acidic residues.

This is an uncharacterized protein from Mus musculus (Mouse).